We begin with the raw amino-acid sequence, 337 residues long: Neurogenic differentiation factor 6 (337 aa).

The interval 28–80 (QKQIKKPESFPKQVVLRGKSIKRAPGEETEKEEEEEDREEEDENGLSRRRGLR) is disordered. Residues 54–71 (EETEKEEEEEDREEEDEN) are compositionally biased toward acidic residues. The short motif at 80–86 (RKKKTTK) is the Nuclear localization signal element. Residues 94-146 (FRRQEANARERNRMHGLNDALDNLRKVVPCYSKTQKLSKIETLRLAKNYIWAL) enclose the bHLH domain.

As to quaternary structure, efficient DNA binding requires dimerization with another bHLH protein. Specific to the nervous system of both embryos and adults. Highest levels in the cortical plate of the cerebrum.

Its subcellular location is the nucleus. In terms of biological role, activates E box-dependent transcription in collaboration with TCF3/E47. May be a trans-acting factor involved in the development and maintenance of the mammalian nervous system. Transactivates the promoter of its own gene. This chain is Neurogenic differentiation factor 6 (Neurod6), found in Mus musculus (Mouse).